We begin with the raw amino-acid sequence, 665 residues long: Ion-translocating oxidoreductase complex subunit C (665 aa).

4Fe-4S ferredoxin-type domains follow at residues 368-398 (EYAE…QQLY) and 408-437 (KSEE…IQYF). Residues Cys378, Cys381, Cys384, Cys388, Cys417, Cys420, Cys423, and Cys427 each coordinate [4Fe-4S] cluster. 2 stretches are compositionally biased toward basic and acidic residues: residues 465–477 (QARM…ERKA) and 485–513 (ARRE…KANE). Disordered regions lie at residues 465 to 568 (QARM…DAKK), 580 to 623 (AKKL…LDPK), and 637 to 665 (KKLA…QIVR). 2 stretches are compositionally biased toward polar residues: residues 554-564 (VENQEQQTQPT) and 585-600 (QTNS…QTAE). Basic and acidic residues predominate over residues 602–615 (EVEKTKSAVEKTEE). Residues 643-656 (NSTSEAISNSQTAE) are compositionally biased toward polar residues.

The protein belongs to the 4Fe4S bacterial-type ferredoxin family. RnfC subfamily. In terms of assembly, the complex is composed of six subunits: RnfA, RnfB, RnfC, RnfD, RnfE and RnfG. Requires [4Fe-4S] cluster as cofactor.

Its subcellular location is the cell inner membrane. Its function is as follows. Part of a membrane-bound complex that couples electron transfer with translocation of ions across the membrane. This chain is Ion-translocating oxidoreductase complex subunit C, found in Haemophilus influenzae (strain 86-028NP).